The sequence spans 292 residues: 4-hydroxybenzoate octaprenyltransferase (292 aa).

Helical transmembrane passes span 24-44 (IGTL…NAGM), 47-67 (LTNF…GCVI), 97-117 (AISL…MLSV), 119-139 (TILL…MKRY), 145-165 (VVLG…SINA), 171-191 (WLLF…YAMV), 214-234 (HIIG…GALN), 238-258 (LSYW…QVLI), and 270-290 (FLNN…SYPV).

It belongs to the UbiA prenyltransferase family. Mg(2+) is required as a cofactor.

Its subcellular location is the cell inner membrane. It carries out the reaction all-trans-octaprenyl diphosphate + 4-hydroxybenzoate = 4-hydroxy-3-(all-trans-octaprenyl)benzoate + diphosphate. Its pathway is cofactor biosynthesis; ubiquinone biosynthesis. In terms of biological role, catalyzes the prenylation of para-hydroxybenzoate (PHB) with an all-trans polyprenyl group. Mediates the second step in the final reaction sequence of ubiquinone-8 (UQ-8) biosynthesis, which is the condensation of the polyisoprenoid side chain with PHB, generating the first membrane-bound Q intermediate 3-octaprenyl-4-hydroxybenzoate. This is 4-hydroxybenzoate octaprenyltransferase from Pseudoalteromonas translucida (strain TAC 125).